Here is a 126-residue protein sequence, read N- to C-terminus: Adrenocorticotropic hormone receptor (126 aa).

The chain crosses the membrane as a helical span at residues 1–25; the sequence is VLPEEIFFTISIVGVLENLIVLLAV. Residues 26–34 are Cytoplasmic-facing; that stretch reads FKNKNLQAP. The chain crosses the membrane as a helical span at residues 35–55; it reads MYFFICSLAISDMLGSLYKIL. Over 56-80 the chain is Extracellular; sequence ENILIILRNMGYLKPRGSFETTADD. A helical membrane pass occupies residues 81–102; the sequence is IIDSLFVLSLLGAIFSLSVIAA. At 103 to 123 the chain is on the cytoplasmic side; the sequence is DRYITIFHALRYHSIVTMRRT. A helical membrane pass occupies residues 124-126; that stretch reads VVV.

It belongs to the G-protein coupled receptor 1 family. In terms of assembly, interacts with MRAP; increasing ligand-sensitivity and generation of cAMP. Interacts with MRAP2; competing with MRAP for binding to MC2R and impairing the binding of corticotropin (ACTH).

It localises to the cell membrane. Functionally, receptor for corticotropin (ACTH). This receptor is mediated by G proteins (G(s)) which activate adenylate cyclase (cAMP). The sequence is that of Adrenocorticotropic hormone receptor (MC2R) from Papio hamadryas (Hamadryas baboon).